The chain runs to 601 residues: Lanthanide-dependent methanol dehydrogenase (601 aa).

An N-terminal signal peptide occupies residues 1–21 (MRAVHLLALGAGLAAASPALA). Cys124 and Cys125 are joined by a disulfide. Residues Arg130, Thr174, Ser189, Gly190, and Gly191 each coordinate pyrroloquinoline quinone. Glu192 lines the La(3+) pocket. The cysteines at positions 197 and 256 are disulfide-linked. Trp258 contributes to the pyrroloquinoline quinone binding site. Residues Asn276, Asp318, and Asp320 each coordinate La(3+). Asp318 serves as the catalytic Proton acceptor. Arg345 contacts pyrroloquinoline quinone. A disulfide bridge connects residues Cys408 and Cys437. Positions 494 and 558 each coordinate pyrroloquinoline quinone.

This sequence belongs to the bacterial PQQ dehydrogenase family. Homodimer. La(3+) serves as cofactor. Nd(3+) is required as a cofactor. It depends on pyrroloquinoline quinone as a cofactor.

The protein localises to the periplasm. It carries out the reaction 2 Fe(III)-[cytochrome cL] + methanol = 2 Fe(II)-[cytochrome cL] + formaldehyde + 2 H(+). Functionally, catalyzes the oxidation of methanol to formaldehyde, but only in the presence of lanthanides (Ln). Contributes to methanol metabolism when La(3+) is present in the natural environment of the bacterium, allowing bacterial growth with methanol as carbon and energy source. Thereby is an essential enzyme for Ln-dependent methylotrophy. Uses a specific cytochrome cL (XoxG), encoded by the adjacent gene in the locus, as electron acceptor. Also plays a role in the transcriptional regulation of the mxa and xox1 operons, most likely acting as a lanthanide sensory module. Is also able to oxidize formaldehyde to formate in vitro, but this activity does not occur in vivo. This is Lanthanide-dependent methanol dehydrogenase from Methylorubrum extorquens (strain ATCC 14718 / DSM 1338 / JCM 2805 / NCIMB 9133 / AM1) (Methylobacterium extorquens).